Here is a 353-residue protein sequence, read N- to C-terminus: Bone morphogenetic protein 2 (353 aa).

The propeptide occupies 1-239 (GSLKRPEDLL…GHPLHKREKR (239 aa)). N-linked (GlcNAc...) asparagine glycans are attached at residues Asn-91, Asn-121, and Asn-157. The interval 228 to 248 (GKGHPLHKREKRQAKHKQRKR) is disordered. The segment covering 231–248 (HPLHKREKRQAKHKQRKR) has biased composition (basic residues). Intrachain disulfides connect Cys-253–Cys-318, Cys-282–Cys-350, and Cys-286–Cys-352. Asn-295 is a glycosylation site (N-linked (GlcNAc...) asparagine).

This sequence belongs to the TGF-beta family. Homodimer; disulfide-linked.

The protein resides in the secreted. In terms of biological role, negatively regulates the structure and function of the limb apical ectodermal ridge. The sequence is that of Bone morphogenetic protein 2 (BMP2) from Gallus gallus (Chicken).